Consider the following 165-residue polypeptide: Phosphopantetheine adenylyltransferase (165 aa).

Serine 10 is a binding site for substrate. ATP contacts are provided by residues serine 10 to phenylalanine 11 and histidine 18. Residues lysine 42, threonine 79, and arginine 93 each contribute to the substrate site. ATP is bound by residues glycine 94–arginine 96, glutamate 104, and valine 129–threonine 135.

Belongs to the bacterial CoaD family. Homohexamer. Mg(2+) is required as a cofactor.

It is found in the cytoplasm. It catalyses the reaction (R)-4'-phosphopantetheine + ATP + H(+) = 3'-dephospho-CoA + diphosphate. Its pathway is cofactor biosynthesis; coenzyme A biosynthesis; CoA from (R)-pantothenate: step 4/5. In terms of biological role, reversibly transfers an adenylyl group from ATP to 4'-phosphopantetheine, yielding dephospho-CoA (dPCoA) and pyrophosphate. In Rhodopseudomonas palustris (strain BisB5), this protein is Phosphopantetheine adenylyltransferase.